The sequence spans 290 residues: 4-hydroxy-tetrahydrodipicolinate synthase (290 aa).

T44 contacts pyruvate. Y132 serves as the catalytic Proton donor/acceptor. K160 (schiff-base intermediate with substrate) is an active-site residue. Residue I202 coordinates pyruvate.

It belongs to the DapA family. Homotetramer; dimer of dimers.

Its subcellular location is the cytoplasm. The enzyme catalyses L-aspartate 4-semialdehyde + pyruvate = (2S,4S)-4-hydroxy-2,3,4,5-tetrahydrodipicolinate + H2O + H(+). The protein operates within amino-acid biosynthesis; L-lysine biosynthesis via DAP pathway; (S)-tetrahydrodipicolinate from L-aspartate: step 3/4. Catalyzes the condensation of (S)-aspartate-beta-semialdehyde [(S)-ASA] and pyruvate to 4-hydroxy-tetrahydrodipicolinate (HTPA). In Pelobacter propionicus (strain DSM 2379 / NBRC 103807 / OttBd1), this protein is 4-hydroxy-tetrahydrodipicolinate synthase.